The primary structure comprises 193 residues: Molybdenum cofactor guanylyltransferase (193 aa).

Residues Leu8–Gly10, Lys21, Asp67, and Asp98 each bind GTP. Asp98 lines the Mg(2+) pocket.

It belongs to the MobA family. In terms of assembly, monomer. Mg(2+) serves as cofactor.

The protein resides in the cytoplasm. It catalyses the reaction Mo-molybdopterin + GTP + H(+) = Mo-molybdopterin guanine dinucleotide + diphosphate. In terms of biological role, transfers a GMP moiety from GTP to Mo-molybdopterin (Mo-MPT) cofactor (Moco or molybdenum cofactor) to form Mo-molybdopterin guanine dinucleotide (Mo-MGD) cofactor. This Cereibacter sphaeroides (strain ATCC 17029 / ATH 2.4.9) (Rhodobacter sphaeroides) protein is Molybdenum cofactor guanylyltransferase.